The following is a 783-amino-acid chain: Pre-mRNA-splicing ATP-dependent RNA helicase prp28 (783 aa).

Over residues 1 to 52 (MPGPPATAPPPEPIERPPTPPPPPPEDSAAPPPPPDMSAPPPPPQDELPPAP) the composition is skewed to pro residues. Residues 1–193 (MPGPPATAPP…VDEDEAAAQA (193 aa)) form a disordered region. Composition is skewed to basic and acidic residues over residues 75 to 84 (ELVRKKREAD) and 94 to 114 (SKKE…EQSR). Residues 118–135 (STNGASDTASVRSESATP) are compositionally biased toward polar residues. Over residues 167–182 (SSNGNGNSNSNSNSNG) the composition is skewed to low complexity. A Q motif motif is present at residues 343–371 (RSWAESGLPSRLLDLVHRVGYKDPTPIQR). In terms of domain architecture, Helicase ATP-binding spans 374–583 (IPIAMQSRDL…RKYLRRPAIV (210 aa)). 387–394 (AVTGSGKT) provides a ligand contact to ATP. The DEAD box motif lies at 502–505 (DEAD). The 164-residue stretch at 594 to 757 (TVEQRVELIA…RVPDELRKHE (164 aa)) folds into the Helicase C-terminal domain. Residues 752-783 (ELRKHEAAQQKPTRGFSKKNDESSAFGGKGGW) form a disordered region.

Belongs to the DEAD box helicase family. DDX23/PRP28 subfamily. In terms of assembly, component of the U5 snRNP complex.

It localises to the cytoplasm. The protein resides in the nucleus. It catalyses the reaction ATP + H2O = ADP + phosphate + H(+). Its function is as follows. ATP-dependent RNA helicase involved in mRNA splicing. May destabilize the U1/5'-splice site duplex to permit an effective competition for the 5'-splice site by the U6 snRNA, resulting in the switch between U1 and U6 at the 5'-splice site. May also act to unwind the U4/U6 base-pairing interaction in the U4/U6/U5 snRNP, facilitating the first covalent step of splicing. In Aspergillus terreus (strain NIH 2624 / FGSC A1156), this protein is Pre-mRNA-splicing ATP-dependent RNA helicase prp28 (prp28).